The primary structure comprises 254 residues: MVPWLGPDDPFPSIERALGPATGAPGLLAASADLLPSRLIDAYLRGIFPWYSDGQPVLWWSPDPRMILVPAEFKVSPSLRKTLKRVLREPDWEVRVDHDFPGVMRACAQAPRRGQRGTWITAEIIDAYTSLYRSGNAHSIETWHDGRRVGGLYGVSFGRMFFGESMYADVTDASKIALATLVAHLREQGLEMIDCQQNTSHLASLGGREIARKAFVAHVRSAVAEPPIPWQFDKRVLAALTSPAETAAPSGTER.

The protein belongs to the L/F-transferase family.

The protein resides in the cytoplasm. It catalyses the reaction N-terminal L-lysyl-[protein] + L-leucyl-tRNA(Leu) = N-terminal L-leucyl-L-lysyl-[protein] + tRNA(Leu) + H(+). The enzyme catalyses N-terminal L-arginyl-[protein] + L-leucyl-tRNA(Leu) = N-terminal L-leucyl-L-arginyl-[protein] + tRNA(Leu) + H(+). The catalysed reaction is L-phenylalanyl-tRNA(Phe) + an N-terminal L-alpha-aminoacyl-[protein] = an N-terminal L-phenylalanyl-L-alpha-aminoacyl-[protein] + tRNA(Phe). Functionally, functions in the N-end rule pathway of protein degradation where it conjugates Leu, Phe and, less efficiently, Met from aminoacyl-tRNAs to the N-termini of proteins containing an N-terminal arginine or lysine. The protein is Leucyl/phenylalanyl-tRNA--protein transferase of Burkholderia cenocepacia (strain ATCC BAA-245 / DSM 16553 / LMG 16656 / NCTC 13227 / J2315 / CF5610) (Burkholderia cepacia (strain J2315)).